Consider the following 469-residue polypeptide: Probable monogalactosyldiacylglycerol synthase 2, chloroplastic (469 aa).

Residues 1–42 constitute a chloroplast transit peptide; the sequence is MVISVATPRRSIRDAVLGGVLGAGGRQLYQPLRCAFYDGAAG.

Belongs to the glycosyltransferase 28 family.

It localises to the plastid. It is found in the chloroplast membrane. It carries out the reaction a 1,2-diacyl-sn-glycerol + UDP-alpha-D-galactose = a 1,2-diacyl-3-O-(beta-D-galactosyl)-sn-glycerol + UDP + H(+). In terms of biological role, involved in the synthesis of the major structural component of photosynthetic membranes. This is Probable monogalactosyldiacylglycerol synthase 2, chloroplastic (MGD2) from Oryza sativa subsp. indica (Rice).